The sequence spans 575 residues: uncharacterized protein (575 aa).

The protein resides in the cytoplasm. It localises to the cytoskeleton. The protein localises to the microtubule organizing center. It is found in the spindle pole body. This is an uncharacterized protein from Schizosaccharomyces pombe (strain 972 / ATCC 24843) (Fission yeast).